The chain runs to 206 residues: FMN-dependent NADH:quinone oxidoreductase 2 (206 aa).

FMN is bound by residues S10, S16–S18, and S140–G143.

This sequence belongs to the azoreductase type 1 family. In terms of assembly, homodimer. Requires FMN as cofactor.

The catalysed reaction is 2 a quinone + NADH + H(+) = 2 a 1,4-benzosemiquinone + NAD(+). The enzyme catalyses N,N-dimethyl-1,4-phenylenediamine + anthranilate + 2 NAD(+) = 2-(4-dimethylaminophenyl)diazenylbenzoate + 2 NADH + 2 H(+). Quinone reductase that provides resistance to thiol-specific stress caused by electrophilic quinones. Its function is as follows. Also exhibits azoreductase activity. Catalyzes the reductive cleavage of the azo bond in aromatic azo compounds to the corresponding amines. The protein is FMN-dependent NADH:quinone oxidoreductase 2 of Cupriavidus pinatubonensis (strain JMP 134 / LMG 1197) (Cupriavidus necator (strain JMP 134)).